We begin with the raw amino-acid sequence, 62 residues long: Sperm protamine P1 (62 aa).

Positions 1-62 are disordered; the sequence is MARYRRHSRS…RYSRRGRRRY (62 aa).

It belongs to the protamine P1 family. As to expression, testis.

The protein localises to the nucleus. The protein resides in the chromosome. Its function is as follows. Protamines substitute for histones in the chromatin of sperm during the haploid phase of spermatogenesis. They compact sperm DNA into a highly condensed, stable and inactive complex. The chain is Sperm protamine P1 (PRM1) from Neophascogale lorentzii (Long-clawed marsupial mouse).